Here is a 504-residue protein sequence, read N- to C-terminus: UDP-N-acetylmuramoylalanine--D-glutamate ligase (504 aa).

Position 129–135 (129–135 (GTNGKTT)) interacts with ATP.

It belongs to the MurCDEF family.

Its subcellular location is the cytoplasm. The catalysed reaction is UDP-N-acetyl-alpha-D-muramoyl-L-alanine + D-glutamate + ATP = UDP-N-acetyl-alpha-D-muramoyl-L-alanyl-D-glutamate + ADP + phosphate + H(+). It functions in the pathway cell wall biogenesis; peptidoglycan biosynthesis. Cell wall formation. Catalyzes the addition of glutamate to the nucleotide precursor UDP-N-acetylmuramoyl-L-alanine (UMA). The polypeptide is UDP-N-acetylmuramoylalanine--D-glutamate ligase (Burkholderia pseudomallei (strain 668)).